We begin with the raw amino-acid sequence, 1154 residues long: Kinesin-like protein KIN-7E, chloroplastic (1154 aa).

Low complexity-rich tracts occupy residues 1-14 and 29-109; these read MSSS…SISP and VAAA…PPVA. The transit peptide at 1 to 21 directs the protein to the chloroplast; it reads MSSSSRPGRASISPFRSRRTS. The segment at 1–109 is disordered; it reads MSSSSRPGRA…RAAGRAPPVA (109 aa). Positions 119 to 437 constitute a Kinesin motor domain; that stretch reads NIMVTVRFRP…LKFAHRSKHI (319 aa). 199-206 is an ATP binding site; it reads GVTSSGKT. Residues 441–523 adopt a coiled-coil conformation; it reads ASQNKIIDEK…AALMGRIQRL (83 aa). Positions 620-674 are disordered; that stretch reads LSTSVDSESTASGSPSFSRSSQQKHPLLDLKDGRRKSMTRKGDDPALTDSFPGRT. The span at 628–640 shows a compositional bias: low complexity; sequence STASGSPSFSRSS. Coiled coils occupy residues 734-761 and 801-845; these read DSQI…LEQR and ADNR…DNVA. Residues 838-885 are disordered; that stretch reads AKNEDNVASMQSSEPSSTSSNPRDLANEVASHSKMPSRTTEDHTESPL. Residues 846–857 show a composition bias toward low complexity; that stretch reads SMQSSEPSSTSS. Residues 894-967 are a coiled coil; it reads AEIENLKLDK…DLAAAKDQTR (74 aa).

It belongs to the TRAFAC class myosin-kinesin ATPase superfamily. Kinesin family. KIN-7 subfamily.

It is found in the plastid. The protein localises to the chloroplast. The sequence is that of Kinesin-like protein KIN-7E, chloroplastic from Oryza sativa subsp. japonica (Rice).